Here is a 381-residue protein sequence, read N- to C-terminus: S-(hydroxymethyl)glutathione dehydrogenase (381 aa).

Zn(2+) is bound at residue Cys49. His50 contacts NAD(+). Residues His71, Glu72, Cys101, Cys104, Cys107, Cys115, and Cys178 each contribute to the Zn(2+) site. NAD(+) is bound by residues 203-208 (GGGIVG), Asp227, and 298-300 (IGV).

This sequence belongs to the zinc-containing alcohol dehydrogenase family. Class-III subfamily. Zn(2+) serves as cofactor.

It catalyses the reaction a primary alcohol + NAD(+) = an aldehyde + NADH + H(+). The catalysed reaction is a secondary alcohol + NAD(+) = a ketone + NADH + H(+). It carries out the reaction S-(hydroxymethyl)glutathione + NADP(+) = S-formylglutathione + NADPH + H(+). The enzyme catalyses S-(hydroxymethyl)glutathione + NAD(+) = S-formylglutathione + NADH + H(+). It catalyses the reaction S-nitrosoglutathione + NADH + H(+) = S-(hydroxysulfenamide)glutathione + NAD(+). Its function is as follows. Oxidizes long-chain alcohols and, in the presence of glutathione, is able to oxidize formaldehyde. Also acts as a S-nitroso-glutathione reductase by catalyzing the NADH-dependent reduction of S-nitrosoglutathione, thereby regulating protein S-nitrosylation. In Candida maltosa (Yeast), this protein is S-(hydroxymethyl)glutathione dehydrogenase (FDH1).